Here is a 238-residue protein sequence, read N- to C-terminus: Trypsin-3 (238 aa).

The signal sequence occupies residues 1 to 7 (FAVAFAA). The propeptide at 8 to 15 (PIDDEDDK) is activation peptide. The Peptidase S1 domain occupies 16-236 (IVGGYECRKN…YRSWISSTMS (221 aa)). Cystine bridges form between cysteine 22/cysteine 152, cysteine 40/cysteine 56, cysteine 124/cysteine 225, cysteine 131/cysteine 198, cysteine 163/cysteine 177, and cysteine 188/cysteine 212. The Charge relay system role is filled by histidine 55. Glutamate 67, asparagine 69, valine 72, and glutamate 77 together coordinate Ca(2+). Aspartate 99 acts as the Charge relay system in catalysis. Serine 192 (charge relay system) is an active-site residue.

This sequence belongs to the peptidase S1 family. Requires Ca(2+) as cofactor.

The protein resides in the secreted. The protein localises to the extracellular space. The catalysed reaction is Preferential cleavage: Arg-|-Xaa, Lys-|-Xaa.. In Salmo salar (Atlantic salmon), this protein is Trypsin-3.